The sequence spans 610 residues: UvrABC system protein C (610 aa).

Residues 16–94 (SQPGVYRMYD…IKLYQPRYNV (79 aa)) enclose the GIY-YIG domain. The 36-residue stretch at 204 to 239 (DQVLTQLISRMETASQNLEFEEAARIRDQIQAVRRV) folds into the UVR domain.

This sequence belongs to the UvrC family. As to quaternary structure, interacts with UvrB in an incision complex.

It is found in the cytoplasm. The UvrABC repair system catalyzes the recognition and processing of DNA lesions. UvrC both incises the 5' and 3' sides of the lesion. The N-terminal half is responsible for the 3' incision and the C-terminal half is responsible for the 5' incision. This chain is UvrABC system protein C, found in Escherichia coli O139:H28 (strain E24377A / ETEC).